A 213-amino-acid polypeptide reads, in one-letter code: Kynurenine formamidase (213 aa).

W18 provides a ligand contact to substrate. Positions 48, 52, and 54 each coordinate Zn(2+). Residue H58 is the Proton donor/acceptor of the active site. 2 residues coordinate Zn(2+): H160 and E172.

This sequence belongs to the Cyclase 1 superfamily. KynB family. Homodimer. The cofactor is Zn(2+).

It catalyses the reaction N-formyl-L-kynurenine + H2O = L-kynurenine + formate + H(+). It functions in the pathway amino-acid degradation; L-tryptophan degradation via kynurenine pathway; L-kynurenine from L-tryptophan: step 2/2. Functionally, catalyzes the hydrolysis of N-formyl-L-kynurenine to L-kynurenine, the second step in the kynurenine pathway of tryptophan degradation. The protein is Kynurenine formamidase of Burkholderia orbicola (strain MC0-3).